A 367-amino-acid chain; its full sequence is Leucine-rich repeat-containing protein 28 (367 aa).

LRR repeat units follow at residues K16–K36, H42–K63, N66–L87, K89–R111, A112–L133, E135–C156, S158–P180, S181–S202, and E204–K226.

This chain is Leucine-rich repeat-containing protein 28 (Lrrc28), found in Mus musculus (Mouse).